The sequence spans 376 residues: MELVAVKEGLARILVPKAERIYDAPVFYNPVMSLNRDISVLAVKVLGPKRVLDALSATGIRGIRYALETPAEEVWLNDISEEAYGLMKKNASLNIDGELYEEGDRSYLWGEKLVVINKGDANRLMAENFRYFDFLDLDPFGSPVEFLDTALRSVRRNGVLAVTATDTGVLCGAYRNACLRKYLAEPIRGPLCHEAGLRILIGTVVRYAAKYDLGVEVLLAYHRDHYFRAFLKLKSGAKKADKSLSQLGFLWADKSGRFEYRRGFLPDKPGASGPLWLGPLKDESFVEELLESARDHPLAHKKTLSFLQLISEELDVPFHYDTHTLARACSLTPPKLDVIIQRLRELGHSATKTHFSPTSVKTDAPFGVVAEVMKNV.

The Trm1 methyltransferase domain maps to 4–373; the sequence is VAVKEGLARI…APFGVVAEVM (370 aa). S-adenosyl-L-methionine contacts are provided by arginine 36, arginine 61, aspartate 78, aspartate 120, and alanine 121.

This sequence belongs to the class I-like SAM-binding methyltransferase superfamily. Trm1 family.

The catalysed reaction is guanosine(26) in tRNA + 2 S-adenosyl-L-methionine = N(2)-dimethylguanosine(26) in tRNA + 2 S-adenosyl-L-homocysteine + 2 H(+). Its function is as follows. Dimethylates a single guanine residue at position 26 of a number of tRNAs using S-adenosyl-L-methionine as donor of the methyl groups. The chain is tRNA (guanine(26)-N(2))-dimethyltransferase from Thermococcus kodakarensis (strain ATCC BAA-918 / JCM 12380 / KOD1) (Pyrococcus kodakaraensis (strain KOD1)).